The following is a 127-amino-acid chain: Aspartate 1-decarboxylase (127 aa).

The active-site Schiff-base intermediate with substrate; via pyruvic acid is Ser25. Position 25 is a pyruvic acid (Ser) (Ser25). Thr57 contributes to the substrate binding site. The active-site Proton donor is the Tyr58. 73–75 contacts substrate; that stretch reads GAA.

The protein belongs to the PanD family. As to quaternary structure, heterooctamer of four alpha and four beta subunits. Pyruvate serves as cofactor. Is synthesized initially as an inactive proenzyme, which is activated by self-cleavage at a specific serine bond to produce a beta-subunit with a hydroxyl group at its C-terminus and an alpha-subunit with a pyruvoyl group at its N-terminus.

The protein localises to the cytoplasm. The enzyme catalyses L-aspartate + H(+) = beta-alanine + CO2. The protein operates within cofactor biosynthesis; (R)-pantothenate biosynthesis; beta-alanine from L-aspartate: step 1/1. Catalyzes the pyruvoyl-dependent decarboxylation of aspartate to produce beta-alanine. The sequence is that of Aspartate 1-decarboxylase from Exiguobacterium sibiricum (strain DSM 17290 / CCUG 55495 / CIP 109462 / JCM 13490 / 255-15).